A 511-amino-acid polypeptide reads, in one-letter code: Maturase K (511 aa).

This sequence belongs to the intron maturase 2 family. MatK subfamily.

The protein localises to the plastid. In terms of biological role, usually encoded in the trnK tRNA gene intron. Probably assists in splicing its own and other chloroplast group II introns. The protein is Maturase K of Lathraea clandestina (Purple toothwort).